A 442-amino-acid chain; its full sequence is MSATRSTFLGSIFRTAKARILISPIARRSLPSPNFTSSRFHTSSSLRQSRIEGSIPRSFLPSIHVRFHSVSASTWFSSRRTSSQGRLASVSMYIQYSTSVPTRSLRRRISNRKKSSAKPILNVSKFHETISKLPPRFTPEELADAITLEEDPFLCFHLFNWASQQPRFTHENCSYHIAIRKLGAAKMYQEMDDIVNQVLSVRHIGNENLYNSIIFYFTKAGKLIRAVNIFRHMVTSKNLECRPTIRTYHILFKALLGRGNNSYINHVYMETVRSLFRQMVDSGIEPDVFALNCLVKGYVLSLHVNDALRIFHQMSVVYDCEPNSFTYDYLIHGLCAQGRTINARELLSEMKGKGFVPNGKSYNSLVNAFALSGEIDDAVKCLWEMIENGRVVDFISYRTLVDESCRKGKYDEATRLLEMLREKQLVDRDSYDKLVNVLHKDL.

The transit peptide at Met-1–Phe-67 directs the protein to the mitochondrion. PPR repeat units lie at residues Asn-206–Ser-236, Thr-244–Pro-286, Asp-287–Pro-322, Asn-323–Pro-357, Asn-358–Val-392, and Asp-393–Asp-427.

Belongs to the PPR family. P subfamily.

It localises to the mitochondrion. This Arabidopsis thaliana (Mouse-ear cress) protein is Pentatricopeptide repeat-containing protein At2g27800, mitochondrial.